The chain runs to 631 residues: Serine/threonine-protein kinase PLK3 (631 aa).

Residues 1–59 (MEPAAGFLSPRPFPRAAVPSAPPAGPGPPANASPRSEPEVLAGPRAPDPPGRLITDPLS) form a disordered region. Positions 20–31 (SAPPAGPGPPAN) are enriched in pro residues. Residues 63-315 (YTKGRLLGKG…IEQILRHDFF (253 aa)) enclose the Protein kinase domain. ATP contacts are provided by residues 69–77 (LGKGGFARC) and Lys-92. Residue Asp-186 is the Proton acceptor of the active site. 2 POLO box domains span residues 448–526 (WVSK…YMEQ) and 547–630 (LLLQ…DQSP).

It belongs to the protein kinase superfamily. Ser/Thr protein kinase family. CDC5/Polo subfamily. Interacts (via the POLO-box domain) with CIB1; leading to inhibit PLK3 kinase activity. Interacts with GOLGB1. In terms of processing, phosphorylated in an ATM-dependent manner following DNA damage. Phosphorylated as cells enter mitosis and dephosphorylated as cells exit mitosis. Expressed in skin.

It is found in the cytoplasm. Its subcellular location is the nucleus. The protein resides in the nucleolus. It localises to the golgi apparatus. The protein localises to the cytoskeleton. It is found in the microtubule organizing center. Its subcellular location is the centrosome. The enzyme catalyses L-seryl-[protein] + ATP = O-phospho-L-seryl-[protein] + ADP + H(+). It carries out the reaction L-threonyl-[protein] + ATP = O-phospho-L-threonyl-[protein] + ADP + H(+). In terms of biological role, serine/threonine-protein kinase involved in cell cycle regulation, response to stress and Golgi disassembly. Polo-like kinases act by binding and phosphorylating proteins that are already phosphorylated on a specific motif recognized by the POLO box domains. Phosphorylates ATF2, BCL2L1, CDC25A, CDC25C, CHEK2, HIF1A, JUN, p53/TP53, p73/TP73, PTEN, TOP2A and VRK1. Involved in cell cycle regulation: required for entry into S phase and cytokinesis. Phosphorylates BCL2L1, leading to regulate the G2 checkpoint and progression to cytokinesis during mitosis. Plays a key role in response to stress: rapidly activated upon stress stimulation, such as ionizing radiation, reactive oxygen species (ROS), hyperosmotic stress, UV irradiation and hypoxia. Involved in DNA damage response and G1/S transition checkpoint by phosphorylating CDC25A, p53/TP53 and p73/TP73. Phosphorylates p53/TP53 in response to reactive oxygen species (ROS), thereby promoting p53/TP53-mediated apoptosis. Phosphorylates CHEK2 in response to DNA damage, promoting the G2/M transition checkpoint. Phosphorylates the transcription factor p73/TP73 in response to DNA damage, leading to inhibit p73/TP73-mediated transcriptional activation and pro-apoptotic functions. Phosphorylates HIF1A and JUN is response to hypoxia. Phosphorylates ATF2 following hyperosmotic stress in corneal epithelium. Also involved in Golgi disassembly during the cell cycle: part of a MEK1/MAP2K1-dependent pathway that induces Golgi fragmentation during mitosis by mediating phosphorylation of VRK1. May participate in endomitotic cell cycle, a form of mitosis in which both karyokinesis and cytokinesis are interrupted and is a hallmark of megakaryocyte differentiation, via its interaction with CIB1. In Mus musculus (Mouse), this protein is Serine/threonine-protein kinase PLK3 (Plk3).